An 81-amino-acid polypeptide reads, in one-letter code: Putative CNGA1-overlapping antisense gene protein (81 aa).

Expressed in brain, notably in regions involved in long-term potentiation and long-term depression, such as hippocampal CA1 and CA3, dentate gyrus and cerebellar Purkinje layer.

This is Putative CNGA1-overlapping antisense gene protein from Homo sapiens (Human).